The primary structure comprises 3075 residues: Probable polyketide synthase 30 (3075 aa).

Residues 26 to 458 (SGDVAVIGIG…GSNVCLILSE (433 aa)) enclose the Ketosynthase family 3 (KS3) domain. Active-site for beta-ketoacyl synthase activity residues include Cys-198, His-337, and His-381. The tract at residues 663-696 (GVSADIIIGHSLGEVSSPYCSGMIDFQTLCYLTY) is acyl/malonyl transferase. Ser-673 (for acyl/malonyl transferase activity) is an active-site residue. The N-terminal hotdog fold stretch occupies residues 963–1085 (GPSINNLGNN…GNFSLTKHNS (123 aa)). The region spanning 963–1269 (GPSINNLGNN…CALVSLGSNP (307 aa)) is the PKS/mFAS DH domain. The active-site Proton acceptor; for dehydratase activity is His-997. The C-terminal hotdog fold stretch occupies residues 1102–1269 (NFTSMSKQDF…CALVSLGSNP (168 aa)). Asp-1174 acts as the Proton donor; for dehydratase activity in catalysis. Positions 2533–2610 (DNNEIIRSTI…QSIEIIKSAH (78 aa)) constitute a Carrier domain. Ser-2570 carries the O-(pantetheine 4'-phosphoryl)serine modification.

Requires pantetheine 4'-phosphate as cofactor.

Probable polyketide synthase. May be involved in the process of cell migration. The chain is Probable polyketide synthase 30 (pks30) from Dictyostelium discoideum (Social amoeba).